A 540-amino-acid chain; its full sequence is Cytochrome bc1 complex cytochrome b subunit (540 aa).

The helical transmembrane segment at 40–60 threads the bilayer; sequence EIALYSFIILLLTGVYLTLFF. Residues histidine 105 and histidine 119 each contribute to the heme site. The next 3 helical transmembrane spans lie at 109–129, 137–157, and 169–189; these read ALTF…TGAF, WIIG…GYSL, and IMSA…WLIF. Residues histidine 206 and histidine 221 each coordinate heme. The next 5 membrane-spanning stretches (helical) occupy residues 207–227, 259–279, 325–345, 371–391, and 408–428; these read VLII…LVWY, FGLV…INAI, AFWV…YPFI, LGVM…NDLF, and IGLI…CLGL.

It belongs to the cytochrome b family. The cytochrome bc1 complex is composed of a cytochrome b (QcrB), the Rieske protein iron-sulfur (QcrA) and a diheme cytochrome c (QcrC) subunit. Requires heme as cofactor.

It localises to the cell membrane. It carries out the reaction a quinol + 2 Fe(III)-[cytochrome c](out) = a quinone + 2 Fe(II)-[cytochrome c](out) + 2 H(+)(out). Cytochrome b subunit of the cytochrome bc1 complex, an essential component of the respiratory electron transport chain required for ATP synthesis. The bc1 complex catalyzes the oxidation of menaquinol and the reduction of cytochrome c in the respiratory chain. The bc1 complex operates through a Q-cycle mechanism that couples electron transfer to generation of the proton gradient that drives ATP synthesis. This is Cytochrome bc1 complex cytochrome b subunit (qcrB) from Corynebacterium diphtheriae (strain ATCC 700971 / NCTC 13129 / Biotype gravis).